Here is a 404-residue protein sequence, read N- to C-terminus: IDGNEAVAQVVYQINEVIAIYPITPSSPMAEWADAWASEGKPNIWGTVPTVVQMQSEGGVAGAVHGALQTGSLTTTFTASQGLLLMIPNMYKIAGELTPTVFHIAARSLAAQALSIFGDHSDVMATRGTGFAMLCAASVQEAHDFALISTRTTLESRIPFLHFFDGFRTSHEINKIELLTTENLQTFIPNELVIAHRSRAFTPDNSFTRGTGQNPDVYFQGEEGTVIYYIACQASLKSMDEFAQMTGRQYQLFEYHGDSTAERVIVLMGSGCETVHETVDYLNTLGEKVGVIKVRLYHPFDSQRFIAALPPTTRSIAVLDRTKEPGASGEPLYLDVVAALYEAGEQLPKVVGGRYGLSSKEFTPGMVKAVFDNLAATIPKNHFTIGINDDVSHTSLDYDPDFNI.

Belongs to the pyruvate:ferredoxin/flavodoxin oxidoreductase family.

The catalysed reaction is oxidized [flavodoxin] + pyruvate + CoA + 2 H(+) = reduced [flavodoxin] + acetyl-CoA + CO2. Its function is as follows. Oxidoreductase required for the transfer of electrons from pyruvate to flavodoxin, which reduces nitrogenase. This is Pyruvate-flavodoxin oxidoreductase (nifJ) from Nostoc sp. (strain ATCC 29151 / PCC 7119) (Anabaena sp.).